An 81-amino-acid polypeptide reads, in one-letter code: NAD(P)H-quinone oxidoreductase subunit O (81 aa).

This sequence belongs to the complex I NdhO subunit family. NDH-1 can be composed of about 15 different subunits; different subcomplexes with different compositions have been identified which probably have different functions.

The protein localises to the cellular thylakoid membrane. It carries out the reaction a plastoquinone + NADH + (n+1) H(+)(in) = a plastoquinol + NAD(+) + n H(+)(out). The catalysed reaction is a plastoquinone + NADPH + (n+1) H(+)(in) = a plastoquinol + NADP(+) + n H(+)(out). Its function is as follows. NDH-1 shuttles electrons from an unknown electron donor, via FMN and iron-sulfur (Fe-S) centers, to quinones in the respiratory and/or the photosynthetic chain. The immediate electron acceptor for the enzyme in this species is believed to be plastoquinone. Couples the redox reaction to proton translocation, and thus conserves the redox energy in a proton gradient. Cyanobacterial NDH-1 also plays a role in inorganic carbon-concentration. This Prochlorococcus marinus (strain MIT 9303) protein is NAD(P)H-quinone oxidoreductase subunit O.